The sequence spans 153 residues: Large ribosomal subunit protein uL13 (153 aa).

Belongs to the universal ribosomal protein uL13 family. In terms of assembly, part of the 50S ribosomal subunit.

Its function is as follows. This protein is one of the early assembly proteins of the 50S ribosomal subunit, although it is not seen to bind rRNA by itself. It is important during the early stages of 50S assembly. The protein is Large ribosomal subunit protein uL13 of Methylobacterium nodulans (strain LMG 21967 / CNCM I-2342 / ORS 2060).